A 604-amino-acid polypeptide reads, in one-letter code: NADP-dependent malic enzyme, mitochondrial (604 aa).

The disordered stretch occupies residues 29 to 50 (APAQGCHSKPGPARPVPLKKRG). The active-site Proton donor is the Tyr-137. Arg-190 is a binding site for NAD(+). Lys-208 acts as the Proton acceptor in catalysis. A divalent metal cation is bound by residues Glu-280, Asp-281, and Asp-304. NAD(+) is bound at residue Asp-304. A Phosphoserine modification is found at Ser-371. Asn-443 is a binding site for NAD(+).

This sequence belongs to the malic enzymes family. Requires Mg(2+) as cofactor. Mn(2+) serves as cofactor. As to expression, expressed predominantly in organs with a low-division rate.

The protein resides in the mitochondrion matrix. It carries out the reaction (S)-malate + NADP(+) = pyruvate + CO2 + NADPH. It catalyses the reaction oxaloacetate + H(+) = pyruvate + CO2. Its function is as follows. Catalyzes the oxidative decarboxylation of (S)-malate to pyruvate using NADP(+) as a cofactor. Can also reverse the decarboxylation reaction, but only with significantly lower efficiency. The sequence is that of NADP-dependent malic enzyme, mitochondrial from Homo sapiens (Human).